The following is a 446-amino-acid chain: Inhibitor of Apoptosis OPG037 (446 aa).

ANK repeat units lie at residues 71 to 100 (DGNY…DPNA), 104 to 135 (QHKT…KINN), 207 to 237 (DGNT…DVNK), 241 to 271 (FGDS…VITD), 296 to 325 (YDST…ICED), and 327 to 351 (MYYA…SVDS).

Belongs to the orthopoxvirus OPG037 protein family. As to quaternary structure, may interact with host caspase-9-Apaf-1 complex.

The protein localises to the host cytoplasm. Functionally, inhibits host apoptosis. Acts by associating with host apoptosome. This chain is Inhibitor of Apoptosis OPG037 (OPG037), found in Variola virus (isolate Human/India/Ind3/1967) (VARV).